The primary structure comprises 765 residues: Cullin-5 (765 aa).

Positions 696-757 (RELRVQEGIV…NKYMERRADD (62 aa)) constitute a Cullin neddylation domain. Lysine 709 participates in a covalent cross-link: Glycyl lysine isopeptide (Lys-Gly) (interchain with G-Cter in NEDD8).

Belongs to the cullin family. As to quaternary structure, interacts with rbx-1 and rbx-2. Neddylated; which enhances the ubiquitination activity of SCF-like complex.

It participates in protein modification; protein ubiquitination. Its function is as follows. Probable core component of cullin-based SCF-like E3 ubiquitin-protein ligase complexes which mediate the ubiquitination and subsequent proteasomal degradation of target proteins. In association with rbx-2 seems to be involved in meiotic cell cycle progression in the germline. Required for phosphorylation of the MAP kinase MPK-1 in the germline. The polypeptide is Cullin-5 (cul-5) (Caenorhabditis elegans).